We begin with the raw amino-acid sequence, 492 residues long: MDPYKNRPSSAFNSPFWTTNSGAPIWNNNSSLTVGSRGPILLEDYHLVEKLANFDRERIPERVVHARGASAKGFFEVTHDISHLTCADFLRAPGVQTPLIVRFSTVIHERGSPETLRDPRGFAVKFYTREGNFDLVGNNFPVFFVRDGLKFPDMVHALKPNPKSHIQENWRILDFFSHHPESLHMFSFLFDDVGIPQDYRHMDGFGVNTYTLINKAGKAVYVKFHWKTTCGEKCLLDDEAIRVGGSNHSHATQDLYDSIAAGNYPEWKLYIQTLDPENEDRLDFDPLDVTKTWPEDVLPLQPVGRMVLNKNIDNFFAENEQLAFCPAIIVPGVYYSDDKLLQTRIFSYADTQRHRLGPNYLQLPANSPKCAHHNNHHDGFMNFMHRDEEVNYFPSRYDPVRHAERVPVPPRTLGGKREKCMIEKENNFKQPGERYRSWPSDRQERFVRRWVDALSDPRVTHEIRSIWISYWSQADRSLGQKIASHLNLKPSI.

Residues H65 and N138 contribute to the active site. Residue Y348 coordinates heme.

The protein belongs to the catalase family. In terms of assembly, homotetramer. It depends on heme as a cofactor.

It is found in the peroxisome. The protein localises to the glyoxysome. The catalysed reaction is 2 H2O2 = O2 + 2 H2O. Its function is as follows. Occurs in almost all aerobically respiring organisms and serves to protect cells from the toxic effects of hydrogen peroxide. This Glycine max (Soybean) protein is Catalase-3 (CAT3).